Reading from the N-terminus, the 527-residue chain is Glutamyl-tRNA reductase 1, chloroplastic (527 aa).

A chloroplast-targeting transit peptide spans 1–43 (MAGATSATAAAGAFAAAKARGPAAACPWLVAAGGRRRSGVVRC). Substrate-binding positions include 124–127 (TCNR), Ser-184, 189–191 (EGQ), and Gln-195. Cys-125 serves as the catalytic Nucleophile. Position 266–271 (266–271 (GAGKMG)) interacts with NADP(+).

The protein belongs to the glutamyl-tRNA reductase family. Homodimer.

It is found in the plastid. The protein resides in the chloroplast. It carries out the reaction (S)-4-amino-5-oxopentanoate + tRNA(Glu) + NADP(+) = L-glutamyl-tRNA(Glu) + NADPH + H(+). Its pathway is porphyrin-containing compound metabolism; protoporphyrin-IX biosynthesis; 5-aminolevulinate from L-glutamyl-tRNA(Glu): step 1/2. Functionally, catalyzes the NADPH-dependent reduction of glutamyl-tRNA(Glu) to glutamate 1-semialdehyde (GSA). This Hordeum vulgare (Barley) protein is Glutamyl-tRNA reductase 1, chloroplastic (HEMA1).